The following is a 444-amino-acid chain: Transcriptional regulatory protein GlrR (444 aa).

Positions 7-121 (HLLLVDDDPG…ALYQAIDDAL (115 aa)) constitute a Response regulatory domain. Asp56 is modified (4-aspartylphosphate). Positions 136 to 366 (IVTRSPLMLR…VNVIEQCVAL (231 aa)) constitute a Sigma-54 factor interaction domain. Residues 164–171 (GQSGTGKE) and 227–236 (AEGGTLFLDE) contribute to the ATP site. Residues 414 to 433 (VTHAARMAGRNRTEFYKLLS) constitute a DNA-binding region (H-T-H motif).

Phosphorylated by GlrK.

It is found in the cytoplasm. Member of the two-component regulatory system GlrR/GlrK that up-regulates transcription of the glmY sRNA when cells enter the stationary growth phase. Regulates glmY transcription by binding to three conserved sites in the purL-glmY intergenic region. This is Transcriptional regulatory protein GlrR (glrR) from Escherichia coli (strain K12).